A 457-amino-acid polypeptide reads, in one-letter code: Multidrug resistance protein MdtK (457 aa).

Topologically, residues 1–10 are cytoplasmic; sequence MQKYISEARL. A helical transmembrane segment spans residues 11 to 31; that stretch reads LLALAIPVILAQIAQTAMGFV. Residues 32–52 lie on the Extracellular side of the membrane; sequence DTVMAGGYSATDMAAVAIGTS. Residues 53–73 form a helical membrane-spanning segment; sequence IWLPAILFGHGLLLALTPVIA. Over 74-92 the chain is Cytoplasmic; that stretch reads QLNGSGRRERIAHQVRQGF. The helical transmembrane segment at 93–113 threads the bilayer; the sequence is WLAGFVSVLIMLVLWNAGYII. The Extracellular segment spans residues 114–126; it reads RSMENIDPALADK. A helical membrane pass occupies residues 127 to 147; sequence AVGYLRALLWGAPGYLFFQVA. The Cytoplasmic segment spans residues 148 to 159; the sequence is RNQCEGLAKTKP. Residues 160–180 traverse the membrane as a helical segment; that stretch reads GMVMGFIGLLVNIPVNYIFIY. The Extracellular segment spans residues 181 to 188; sequence GHFGMPEL. The chain crosses the membrane as a helical span at residues 189–209; that stretch reads GGVGCGVATAAVYWVMFLAMV. Over 210-242 the chain is Cytoplasmic; the sequence is SYIKRARSMRDIRNEKGTAKPDPAVMKRLIQLG. The chain crosses the membrane as a helical span at residues 243–263; that stretch reads LPIALALFFEVTLFAVVALLV. At 264 to 275 the chain is on the extracellular side; that stretch reads SPLGIVDVAGHQ. Residues 276-296 form a helical membrane-spanning segment; it reads IALNFSSLMFVLPMSLAAAVT. The Cytoplasmic segment spans residues 297-313; the sequence is IRVGYRLGQGSTLDAQT. The chain crosses the membrane as a helical span at residues 314 to 334; it reads AARTGLMVGVCMATLTAIFTV. Topologically, residues 335 to 349 are extracellular; the sequence is SLREQIALLYNDNPE. The chain crosses the membrane as a helical span at residues 350–370; sequence VVTLAAHLMLLAAVYQISDSI. Over 371 to 386 the chain is Cytoplasmic; the sequence is QVIGSGILRGYKDTRS. Residues 387 to 407 traverse the membrane as a helical segment; the sequence is IFYITFTAYWVLGLPSGYILA. The Extracellular segment spans residues 408 to 417; that stretch reads LTDLVVEPMG. The chain crosses the membrane as a helical span at residues 418 to 438; the sequence is PAGFWIGFIIGLTSAAIMMML. Residues 439–457 lie on the Cytoplasmic side of the membrane; the sequence is RMRYLQRLPSAIILQRASR.

It belongs to the multi antimicrobial extrusion (MATE) (TC 2.A.66.1) family. MdtK subfamily.

Its subcellular location is the cell inner membrane. Multidrug efflux pump that functions probably as a Na(+)/drug antiporter. This chain is Multidrug resistance protein MdtK (mdtK), found in Escherichia coli O157:H7.